Consider the following 300-residue polypeptide: Heme A synthase (300 aa).

Over 1-8 (MLKEKNLK) the chain is Cytoplasmic. Residues 9 to 29 (WLSLFTTVLMLFVQIGGALVT) traverse the membrane as a helical segment. At 30 to 64 (KTGSADGCGSSWPLCHGKFVPTHIPKETLIELAHR) the chain is on the extracellular side. A disulfide bond links Cys-37 and Cys-44. The active site involves Glu-60. A heme o-binding site is contributed by His-63. A helical transmembrane segment spans residues 65–85 (GVSGLALLSVTWLVILSIKYI). At 86 to 92 (GHKKETK) the chain is on the cytoplasmic side. The helical transmembrane segment at 93 to 113 (FLCYMSIGFIFAQALIGAAAV) threads the bilayer. At 114–123 (MWQQNGFVLA) the chain is on the extracellular side. Residues 124–144 (LHFGISLISFSAVFLLTLLIF) traverse the membrane as a helical segment. His-125 lines the heme o pocket. At 145 to 163 (EVDQKFDATKLILQPKLRR) the chain is on the cytoplasmic side. A helical membrane pass occupies residues 164–184 (HTIGLTSFIYFVIYSGALVRH). The Extracellular segment spans residues 185–218 (EKASLACSSWPLCRKGAFILPQNFYEWVQMSHRT). A disulfide bridge connects residues Cys-191 and Cys-197. Residue His-216 participates in heme b binding. A helical membrane pass occupies residues 219–239 (LAFILFIWLTYVAFHAMRNYA). Residues 240–249 (QYRVIKYGYM) are Cytoplasmic-facing. A helical transmembrane segment spans residues 250 to 270 (IAFILICLQVTTGALTIFTAV). Over 271–275 (NLYIA) the chain is Extracellular. Residues 276–296 (LLHALFITLLFGLLCYFILLI) traverse the membrane as a helical segment. His-278 is a heme b binding site. Residues 297–300 (SRAK) lie on the Cytoplasmic side of the membrane.

It belongs to the COX15/CtaA family. Type 1 subfamily. In terms of assembly, interacts with CtaB. Heme b is required as a cofactor.

The protein resides in the cell membrane. The enzyme catalyses Fe(II)-heme o + 2 A + H2O = Fe(II)-heme a + 2 AH2. Its pathway is porphyrin-containing compound metabolism; heme A biosynthesis; heme A from heme O: step 1/1. In terms of biological role, catalyzes the conversion of heme O to heme A by two successive hydroxylations of the methyl group at C8. The first hydroxylation forms heme I, the second hydroxylation results in an unstable dihydroxymethyl group, which spontaneously dehydrates, resulting in the formyl group of heme A. In Macrococcus caseolyticus (strain JCSC5402) (Macrococcoides caseolyticum), this protein is Heme A synthase.